The following is a 125-amino-acid chain: Fluoride-specific ion channel FluC (125 aa).

The next 4 membrane-spanning stretches (helical) occupy residues 1–21, 32–52, 68–88, and 101–121; these read MIQALLVAVGGAIGSLLRYYV, AFPWGTLAVNVVGCFVIGVFA, LLITGFLGGFTTFSAFSLDAI, and IYTVASVGLSMAAVMAGLAVM. The Na(+) site is built by G75 and T78.

This sequence belongs to the fluoride channel Fluc/FEX (TC 1.A.43) family.

It localises to the cell inner membrane. It carries out the reaction fluoride(in) = fluoride(out). Its activity is regulated as follows. Na(+) is not transported, but it plays an essential structural role and its presence is essential for fluoride channel function. In terms of biological role, fluoride-specific ion channel. Important for reducing fluoride concentration in the cell, thus reducing its toxicity. The sequence is that of Fluoride-specific ion channel FluC from Rhizobium leguminosarum bv. trifolii (strain WSM2304).